Consider the following 1927-residue polypeptide: Lactase/phlorizin hydrolase (1927 aa).

The signal sequence occupies residues 1-19 (MELSWHVVFIALLSFSCWG). Positions 20-868 (SDWESDRNFI…NTVNLPSKVR (849 aa)) are cleaved as a propeptide — XBetaGly. Residues 20–1882 (SDWESDRNFI…LMLGTTEAQT (1863 aa)) lie on the Extracellular side of the membrane. Residue Asn-42 is glycosylated (N-linked (GlcNAc...) asparagine). The glycosyl hydrolase-1 1; Region I stretch occupies residues 44 to 286 (SGLLGDQSSN…FIFNLKLPDC (243 aa)). Positions 362 to 855 (IWEAFANQSR…GFLTKGAKRL (494 aa)) are glycosyl hydrolase-1 2; Region II. 7 N-linked (GlcNAc...) asparagine glycosylation sites follow: Asn-368, Asn-418, Asn-512, Asn-821, Asn-934, Asn-946, and Asn-989. A glycosyl hydrolase-1 3; Region III. Phlorizin hydrolase/glycosylceramidase activity region spans residues 902-1366 (TFRDDFLWGV…EVITNNGMPL (465 aa)). The active-site Proton donor; for phlorizin hydrolase/Glycosylceramidase activity is Glu-1065. N-linked (GlcNAc...) asparagine glycosylation occurs at Asn-1174. The segment at 1220–1244 (RLNPPSYEDDQEMAEEEDPSWPSTA) is disordered. The segment covering 1226 to 1238 (YEDDQEMAEEEDP) has biased composition (acidic residues). Glu-1273 serves as the catalytic Nucleophile; for phlorizin hydrolase/Glycosylceramidase activity. 2 N-linked (GlcNAc...) asparagine glycosylation sites follow: Asn-1340 and Asn-1508. The interval 1373–1846 (LYGRFPEGFI…CNGFPDPATG (474 aa)) is glycosyl hydrolase-1 4; Region IV. Lactase activity. The active-site Proton donor; for lactase activity is Glu-1538. The interval 1647 to 1927 (RDRSLAAGLN…QQELSPVSSF (281 aa)) is required for homodimerization and transport to the plasma membrane. Residues Asn-1656 and Asn-1672 are each glycosylated (N-linked (GlcNAc...) asparagine). The active-site Nucleophile; for lactase activity is the Glu-1749. Asn-1761 and Asn-1814 each carry an N-linked (GlcNAc...) asparagine glycan. A helical membrane pass occupies residues 1883–1901 (ALYVLFSLVLLGVCGLAFL). Residues 1902-1927 (SYKYCKRSKQGKTQRSQQELSPVSSF) are Cytoplasmic-facing.

The protein belongs to the glycosyl hydrolase 1 family. Homodimer. Post-translationally, N-glycosylated. In terms of tissue distribution, specifically expressed in small intestine.

The protein localises to the apical cell membrane. It carries out the reaction lactose + H2O = beta-D-galactose + D-glucose. It catalyses the reaction phlorizin + H2O = phloretin + beta-D-glucose. The enzyme catalyses D-cellobiose + H2O = beta-D-glucose + D-glucose. The catalysed reaction is quercetin 4'-O-beta-D-glucoside + H2O = quercetin + beta-D-glucose. It carries out the reaction quercetin 3-O-beta-D-glucoside + H2O = quercetin + beta-D-glucose. It catalyses the reaction kaempferol 3-O-beta-D-glucoside + H2O = kaempferol + beta-D-glucose. The enzyme catalyses luteolin 7-O-beta-D-glucoside + H2O = luteolin + beta-D-glucose. The catalysed reaction is luteolin 4'-O-beta-D-glucoside + H2O = luteolin + beta-D-glucose. It carries out the reaction (2S)-naringenin 7-O-beta-D-glucoside + H2O = (2S)-naringenin + beta-D-glucose. It catalyses the reaction eriodictyol-7-O-beta-D-glucoside + H2O = (S)-eriodictyol + beta-D-glucose. The enzyme catalyses apigenin 7-O-beta-D-glucoside + H2O = apigenin + beta-D-glucose. The catalysed reaction is daidzein 7-O-beta-D-glucoside + H2O = daidzein + beta-D-glucose + H(+). It carries out the reaction genistein 7-O-beta-D-glucoside + H2O = genistein + beta-D-glucose. It catalyses the reaction a beta-D-galactosyl-N-acylsphingosine + H2O = a ceramide + beta-D-galactose.. The enzyme catalyses beta-D-glucosyl-(1&lt;-&gt;1')-N-hexadecanoylsphing-4-enine + H2O = N-hexadecanoylsphing-4-enine + beta-D-glucose. The catalysed reaction is beta-D-galactosyl-(1&lt;-&gt;1')-N-hexadecanoylsphing-4-enine + H2O = beta-D-galactose + N-hexadecanoylsphing-4-enine. It carries out the reaction beta-D-galactosyl-(1&lt;-&gt;1')-N-hexadecanoylsphinganine + H2O = N-hexadecanoylsphinganine + beta-D-galactose. It catalyses the reaction beta-D-glucosyl-(1&lt;-&gt;1')-N-hexadecanoylsphinganine + H2O = N-hexadecanoylsphinganine + beta-D-glucose. Broad specificity glycosidase of the intestinal brush border membrane that hydrolyzes lactose, the main sugar in mammalian milk, to produce D-glucose and D-galactose. The mature protein is composed of two domains that catalyze the hydrolysis of beta-glucopyranosides and beta-galactopyranosides, with a preference for hydrophilic aglycones (in lactose and cellobiose) for one domain and hydrophobic aglycones (in phlorizin and glycosylceramides) for the other. This chain is Lactase/phlorizin hydrolase, found in Homo sapiens (Human).